Reading from the N-terminus, the 301-residue chain is uncharacterized protein (301 aa).

Catalysis depends on charge relay system residues Ser44 and Tyr107. Catalysis depends on Tyr133, which acts as the Proton donor. Lys162 (schiff-base intermediate with substrate) is an active-site residue.

It belongs to the DapA family. In terms of assembly, homotetramer.

It is found in the cytoplasm. This is an uncharacterized protein from Pyrobaculum arsenaticum (strain DSM 13514 / JCM 11321 / PZ6).